We begin with the raw amino-acid sequence, 420 residues long: Sulfate adenylyltransferase (420 aa).

An N-acetylalanine modification is found at Ala2.

Belongs to the sulfate adenylyltransferase family. The cofactor is Mg(2+).

It catalyses the reaction sulfate + ATP + H(+) = adenosine 5'-phosphosulfate + diphosphate. The protein operates within sulfur metabolism; hydrogen sulfide biosynthesis; sulfite from sulfate: step 1/3. Its activity is regulated as follows. Inhibited by adenosine 5'-phosphosulfate (APS), but not by 3'phosphoadenosine 5'-phosphosulfate (PAPS). Inhibited by AMP, ADP, CTP, GTP, ITP, UTP and anions other than those in group IV. This is Sulfate adenylyltransferase from Pyropia yezoensis (Susabi-nori).